The following is a 258-amino-acid chain: MAAPAPRLISVFSSPQELGASLAQLVVQQAACCLADAGARFTLGLSGGSLVSMLARELPAAAAPAGPASLARWTLGFCDERLVPFEHAESTYGLYRTHLLSKLPIFDSQVITINPALPVEEAAEDYAKKLRQAFQGDSIPVFDLLILGVGPDGHTCSLFPDHPLLQEREKIVAPISDSPKPPPQRVTLTLPVLNAARTVIYVATGEGKAAILKRILEDKEENPLPAALVQPSAGKLCWFLDEAAARLLTVPFEKHSTL.

An N-acetylalanine modification is found at Ala-2. Ser-49 is modified (phosphoserine). At Lys-180 the chain carries N6-acetyllysine.

The protein belongs to the glucosamine/galactosamine-6-phosphate isomerase family. 6-phosphogluconolactonase subfamily.

It localises to the cytoplasm. The enzyme catalyses 6-phospho-D-glucono-1,5-lactone + H2O = 6-phospho-D-gluconate + H(+). The protein operates within carbohydrate degradation; pentose phosphate pathway; D-ribulose 5-phosphate from D-glucose 6-phosphate (oxidative stage): step 2/3. Its function is as follows. Hydrolysis of 6-phosphogluconolactone to 6-phosphogluconate. In Bos taurus (Bovine), this protein is 6-phosphogluconolactonase (PGLS).